A 955-amino-acid chain; its full sequence is Leucine-rich repeat-containing G-protein coupled receptor 4 (955 aa).

The first 21 residues, 1–21 (MGCPGWPLALFALLLASCSGG), serve as a signal peptide directing secretion. At 22 to 547 (PSGVSSPAPC…LLGSWMIRLT (526 aa)) the chain is on the extracellular side. Residues 26-59 (SSPAPCPAPCACDLDGGADCSGKGLVTVPDGLSV) form the LRRNT domain. Disulfide bonds link Cys31–Cys37 and Cys35–Cys45. LRR repeat units lie at residues 57-81 (LSVFTHSLDLSMNNITKLPEGAFKG), 83-105 (PYLEELRLAGNDLSIIHPMALSG), 106-129 (LKELKVLTLQNNQLKTVPSESLKG), 131-153 (VSLQSLRLDANHIVTVPEDSFEG), 155-177 (VQLRHLWLDDNSLTEVPIRPLSN), 178-201 (LPSLQALTLALNKISHIPDYAFSN), 203-225 (SSLVVLHLHNNKIRTLGPHCFHG), 226-249 (LDNLEALDLNYNNLIDFPDSIRSL), 250-272 (PNLKELGFHSNSITIIPDGAFVK), and 274-296 (PLLRTIHLYDNPLSFVGNSAFQN). Asn201 carries an N-linked (GlcNAc...) asparagine glycan. Asn296 and Asn316 each carry an N-linked (GlcNAc...) asparagine glycan. 5 LRR repeats span residues 320–343 (TNNLESLTLTGTKIRSIPIKFCQE), 345–365 (KMLRTLDLSYNEISALVGFEG), 366–389 (CSSLEEVYLQNNQIQEVQNETFQG), 390–413 (LAALRMLDLSRNRIHTIHKEAFVT), and 415–437 (KALTNLDLSFNDLTAFPTAGLHG). Residues Cys341 and Cys366 are joined by a disulfide bond. Asn384 is a glycosylation site (N-linked (GlcNAc...) asparagine). 2 disulfide bridges follow: Cys472–Cys525 and Cys473–Cys478. A helical transmembrane segment spans residues 548 to 568 (VWFIFLLALIFNVIVIVTMFA). Residues 569-578 (SCSQLTSSKL) are Cytoplasmic-facing. A helical membrane pass occupies residues 579 to 599 (FIGLIAVSNLFMGVYTGTLTV). At 600-623 (LDTISWGQFAEFGIWWETGNGCKV) the chain is on the extracellular side. A disulfide bond links Cys621 and Cys696. A helical transmembrane segment spans residues 624–644 (AGFLAIFSSESAIFFLMLAAI). The Cytoplasmic segment spans residues 645–666 (ERSLSAKDIIKKEKHQHLRKFQ). A helical transmembrane segment spans residues 667–687 (VASLLAVLLAAAAGCLPLFHI). The Extracellular portion of the chain corresponds to 688–706 (GEFSSSPLCLPFPTGETPS). A helical transmembrane segment spans residues 707–727 (LGFTVTLVLLNSLAFLIMVIT). Residues 728 to 759 (YTKLYCTIEKEDLSENAESSMIKHVAWLIFTN) are Cytoplasmic-facing. A helical transmembrane segment spans residues 760–780 (CIFFCPVAFFSFAPLITAIYI). Residues 781–786 (SPEIMK) are Extracellular-facing. Residues 787 to 807 (SVTLIFLPLPACLNPVLYVFF) traverse the membrane as a helical segment. Over 808-955 (NPKFKEDWKL…YAYNIPRMKD (148 aa)) the chain is Cytoplasmic.

The protein belongs to the G-protein coupled receptor 1 family.

Its subcellular location is the cell membrane. Receptor for R-spondins that potentiates the canonical Wnt signaling pathway and is involved in the formation of various organs. Upon binding to R-spondins (RSPO1, RSPO2, RSPO3 or RSPO4), associates with phosphorylated LRP6 and frizzled receptors that are activated by extracellular Wnt receptors, triggering the canonical Wnt signaling pathway to increase expression of target genes. In contrast to classical G-protein coupled receptors, does not activate heterotrimeric G-proteins to transduce the signal. Its function as activator of the Wnt signaling pathway is required for the development of various organs, including liver, kidney, intestine, bone, reproductive tract and eye. May play a role in regulating the circadian rhythms of plasma lipids. Required for proper development of GnRH neurons (gonadotropin-releasing hormone expressing neurons) that control the release of reproductive hormones from the pituitary gland. The chain is Leucine-rich repeat-containing G-protein coupled receptor 4 (lgr4) from Xenopus tropicalis (Western clawed frog).